A 316-amino-acid chain; its full sequence is tRNA pseudouridine synthase B (316 aa).

D38 functions as the Nucleophile in the catalytic mechanism. Residues 238–312 form the PUA domain; the sequence is YPEVIVKSSA…PVCVLARQAG (75 aa).

It belongs to the pseudouridine synthase TruB family. Type 1 subfamily.

It catalyses the reaction uridine(55) in tRNA = pseudouridine(55) in tRNA. Functionally, responsible for synthesis of pseudouridine from uracil-55 in the psi GC loop of transfer RNAs. The protein is tRNA pseudouridine synthase B of Pelotomaculum thermopropionicum (strain DSM 13744 / JCM 10971 / SI).